The primary structure comprises 178 residues: ATP synthase subunit delta (178 aa).

Belongs to the ATPase delta chain family. In terms of assembly, F-type ATPases have 2 components, F(1) - the catalytic core - and F(0) - the membrane proton channel. F(1) has five subunits: alpha(3), beta(3), gamma(1), delta(1), epsilon(1). F(0) has three main subunits: a(1), b(2) and c(10-14). The alpha and beta chains form an alternating ring which encloses part of the gamma chain. F(1) is attached to F(0) by a central stalk formed by the gamma and epsilon chains, while a peripheral stalk is formed by the delta and b chains.

It is found in the cell membrane. Its function is as follows. F(1)F(0) ATP synthase produces ATP from ADP in the presence of a proton or sodium gradient. F-type ATPases consist of two structural domains, F(1) containing the extramembraneous catalytic core and F(0) containing the membrane proton channel, linked together by a central stalk and a peripheral stalk. During catalysis, ATP synthesis in the catalytic domain of F(1) is coupled via a rotary mechanism of the central stalk subunits to proton translocation. In terms of biological role, this protein is part of the stalk that links CF(0) to CF(1). It either transmits conformational changes from CF(0) to CF(1) or is implicated in proton conduction. This is ATP synthase subunit delta from Streptococcus equinus (Streptococcus bovis).